The primary structure comprises 815 residues: Serotype-specific mannosyltransferase WbdA (815 aa).

The segment at 1–374 (MSRAIIENAG…WANTAHLAID (374 aa)) is alpha-(1-&gt;2)-mannosyltransferase. The alpha-(1-&gt;3)-mannosyltransferase stretch occupies residues 431 to 804 (KLLVDISVLA…WKQSAELLLK (374 aa)).

It belongs to the glycosyltransferase group 1 family. Glycosyltransferase 4 subfamily.

The protein localises to the cell inner membrane. It participates in bacterial outer membrane biogenesis; LPS O-antigen biosynthesis. Functionally, mannosyltransferase involved in the biosynthesis of the repeat unit of the lipopolysaccharide (LPS) O-antigen region. In Escherichia coli, this protein is Serotype-specific mannosyltransferase WbdA.